Consider the following 1391-residue polypeptide: DNA-directed RNA polymerase subunit beta' (1391 aa).

Cys-72, Cys-74, Cys-87, and Cys-90 together coordinate Zn(2+). Mg(2+) is bound by residues Asp-462, Asp-464, and Asp-466. The Zn(2+) site is built by Cys-816, Cys-890, Cys-897, and Cys-900.

The protein belongs to the RNA polymerase beta' chain family. The RNAP catalytic core consists of 2 alpha, 1 beta, 1 beta' and 1 omega subunit. When a sigma factor is associated with the core the holoenzyme is formed, which can initiate transcription. Mg(2+) serves as cofactor. Requires Zn(2+) as cofactor.

The catalysed reaction is RNA(n) + a ribonucleoside 5'-triphosphate = RNA(n+1) + diphosphate. DNA-dependent RNA polymerase catalyzes the transcription of DNA into RNA using the four ribonucleoside triphosphates as substrates. The polypeptide is DNA-directed RNA polymerase subunit beta' (Neisseria gonorrhoeae (strain NCCP11945)).